The sequence spans 99 residues: Nucleoid-associated protein Cj1642 (99 aa).

It belongs to the YbaB/EbfC family. Homodimer.

The protein resides in the cytoplasm. The protein localises to the nucleoid. Functionally, binds to DNA and alters its conformation. May be involved in regulation of gene expression, nucleoid organization and DNA protection. The sequence is that of Nucleoid-associated protein Cj1642 from Campylobacter jejuni subsp. jejuni serotype O:2 (strain ATCC 700819 / NCTC 11168).